Consider the following 463-residue polypeptide: MSTESQHLYSQLPAIDRLLRDPAIEPLVAQHGQTLISELLRQLQLQARETIKQHQRLPDWCADWPQALGARLAQQQRPSLAPVFNLSGTVLHTNLGRALLAQPAIEAVTRSMGAAVTLEYDLDGAGRGHRDRAVADLLCQLTGAEDACIVNNNAAAVLLMLAAIAPGKQVVVSRGELVEIGGAFRIPDVMRQAGCQLVEVGTTNRTHLKDYRNAINDQTGLLMKVHTSNYSIQGFTAAVDEAELAQLGAEHGLPTATDLGSGSLIDMAQYGLPAEPMPQRLLAAGVDLVTFSGDKLLGGPQAGIIVGKKALIARLQQHPLKRALRVGKLTLAALEATLRLYQQPELLGQQLPTLRLLTRPQQAMQAAAERLLQVLTPQFTGHFQLRAEPCWSQIGSGSLPVDRLPSYALTFTPQDGRGATLEALAERWRALPQPVIGRINDGRLWLDLRCLEQEDALIEALSA.

Lys-295 carries the post-translational modification N6-(pyridoxal phosphate)lysine.

Belongs to the SelA family. As to quaternary structure, homodecamer; pentamer of dimers. Binds only one seryl-tRNA(Sec) per dimer. Requires pyridoxal 5'-phosphate as cofactor.

The protein localises to the cytoplasm. The enzyme catalyses L-seryl-tRNA(Sec) + selenophosphate + H(+) = L-selenocysteinyl-tRNA(Sec) + phosphate. It functions in the pathway aminoacyl-tRNA biosynthesis; selenocysteinyl-tRNA(Sec) biosynthesis; selenocysteinyl-tRNA(Sec) from L-seryl-tRNA(Sec) (bacterial route): step 1/1. Functionally, converts seryl-tRNA(Sec) to selenocysteinyl-tRNA(Sec) required for selenoprotein biosynthesis. The sequence is that of L-seryl-tRNA(Sec) selenium transferase from Serratia proteamaculans (strain 568).